Here is a 355-residue protein sequence, read N- to C-terminus: Phenylalanine--tRNA ligase alpha subunit (355 aa).

A Mg(2+)-binding site is contributed by Glu-273.

This sequence belongs to the class-II aminoacyl-tRNA synthetase family. Phe-tRNA synthetase alpha subunit type 1 subfamily. Tetramer of two alpha and two beta subunits. The cofactor is Mg(2+).

It localises to the cytoplasm. It carries out the reaction tRNA(Phe) + L-phenylalanine + ATP = L-phenylalanyl-tRNA(Phe) + AMP + diphosphate + H(+). The protein is Phenylalanine--tRNA ligase alpha subunit of Bifidobacterium animalis subsp. lactis (strain AD011).